Reading from the N-terminus, the 292-residue chain is uncharacterized protein (292 aa).

Positions Met-1–Leu-213 are disordered. Composition is skewed to basic residues over residues Thr-27–Lys-43 and Ala-50–Pro-78. Residues Gln-90–Ile-100 are compositionally biased toward polar residues. Residues Pro-116–Arg-134 are compositionally biased toward pro residues. The span at Ser-143 to Thr-158 shows a compositional bias: low complexity.

This is an uncharacterized protein from Caenorhabditis elegans.